The chain runs to 176 residues: Probable RNA-binding protein EIF1AD (176 aa).

Positions 5 to 89 (TKKRYITNKV…VKGEIEYILD (85 aa)) constitute an S1-like domain. The segment covering 117–128 (AKRGKANDKMID) has biased composition (basic and acidic residues). The disordered stretch occupies residues 117 to 176 (AKRGKANDKMIDDDMLPPSESEEEDDESEDEIEDTYDEDEETDDEEFDTYNPNRMQAPSK). Residues 129–164 (DDMLPPSESEEEDDESEDEIEDTYDEDEETDDEEFD) show a composition bias toward acidic residues. Over residues 166–176 (YNPNRMQAPSK) the composition is skewed to polar residues.

It belongs to the EIF1AD family.

The protein is Probable RNA-binding protein EIF1AD of Caenorhabditis briggsae.